We begin with the raw amino-acid sequence, 257 residues long: Probable enoyl-CoA hydratase echA17 (257 aa).

It belongs to the enoyl-CoA hydratase/isomerase family.

The enzyme catalyses a (3S)-3-hydroxyacyl-CoA = a (2E)-enoyl-CoA + H2O. It catalyses the reaction a 4-saturated-(3S)-3-hydroxyacyl-CoA = a (3E)-enoyl-CoA + H2O. Its function is as follows. Could possibly oxidize fatty acids using specific components. The chain is Probable enoyl-CoA hydratase echA17 (echA17) from Mycobacterium avium (strain 104).